Reading from the N-terminus, the 122-residue chain is Large ribosomal subunit protein uL14 (122 aa).

Belongs to the universal ribosomal protein uL14 family. As to quaternary structure, part of the 50S ribosomal subunit. Forms a cluster with proteins L3 and L19. In the 70S ribosome, L14 and L19 interact and together make contacts with the 16S rRNA in bridges B5 and B8.

In terms of biological role, binds to 23S rRNA. Forms part of two intersubunit bridges in the 70S ribosome. This is Large ribosomal subunit protein uL14 from Rickettsia africae (strain ESF-5).